A 1328-amino-acid chain; its full sequence is ATP-dependent DNA helicase hus2/rqh1 (1328 aa).

Low complexity-rich tracts occupy residues 217–236 and 244–254; these read NNLP…NDNN and ASPTPSSVSSQ. The segment at 217 to 254 is disordered; it reads NNLPFPRLNNNNTNNNNDNNAIEKRDSASPTPSSVSSQ. The Helicase ATP-binding domain occupies 528-707; that stretch reads INGTLSGKDV…INTLRMENCL (180 aa). Residue 555–562 participates in ATP binding; it reads AVIEGGAS. Positions 651-654 match the DEAH box motif; it reads DEAH. The Helicase C-terminal domain maps to 728-876; that stretch reads LYTELYRFIS…ETKERQRQML (149 aa). The HRDC domain occupies 1115–1195; that stretch reads IDVMTRCLKD…QKFIDEKEQN (81 aa). Disordered stretches follow at residues 1224 to 1247 and 1260 to 1328; these read EQGF…GDEE and NSQS…QNYR. Residues 1260–1269 show a composition bias toward polar residues; the sequence is NSQSLTQTGS. Basic residues predominate over residues 1283-1300; that stretch reads KSYRHKRGSTSYSRKRKY.

It belongs to the helicase family. RecQ subfamily. As to quaternary structure, interacts with top3.

It localises to the nucleus. It carries out the reaction Couples ATP hydrolysis with the unwinding of duplex DNA by translocating in the 3'-5' direction.. The enzyme catalyses ATP + H2O = ADP + phosphate + H(+). Functionally, ATP-dependent 3'-5' DNA-helicase. Has a role in the repair of UV-induced DNA damage in G2 via recombination-mediated repair. Also has a role in the repair of infrared-induced double DNA strand breaks. The polypeptide is ATP-dependent DNA helicase hus2/rqh1 (Schizosaccharomyces pombe (strain 972 / ATCC 24843) (Fission yeast)).